A 369-amino-acid polypeptide reads, in one-letter code: 4-hydroxy-3-methylbut-2-en-1-yl diphosphate synthase (flavodoxin) (369 aa).

[4Fe-4S] cluster contacts are provided by Cys270, Cys273, Cys305, and Glu312.

This sequence belongs to the IspG family. Requires [4Fe-4S] cluster as cofactor.

The catalysed reaction is (2E)-4-hydroxy-3-methylbut-2-enyl diphosphate + oxidized [flavodoxin] + H2O + 2 H(+) = 2-C-methyl-D-erythritol 2,4-cyclic diphosphate + reduced [flavodoxin]. The protein operates within isoprenoid biosynthesis; isopentenyl diphosphate biosynthesis via DXP pathway; isopentenyl diphosphate from 1-deoxy-D-xylulose 5-phosphate: step 5/6. Its function is as follows. Converts 2C-methyl-D-erythritol 2,4-cyclodiphosphate (ME-2,4cPP) into 1-hydroxy-2-methyl-2-(E)-butenyl 4-diphosphate. The sequence is that of 4-hydroxy-3-methylbut-2-en-1-yl diphosphate synthase (flavodoxin) from Pseudomonas fluorescens (strain Pf0-1).